The chain runs to 54 residues: MLYYALVFLVVALVAGALGFGGIAGASAGIAQILFFVFLALLVISLIASAIRKA.

The next 2 helical transmembrane spans lie at 5–25 and 29–48; these read ALVFLVVALVAGALGFGGIAG and GIAQILFFVFLALLVISLIA.

The protein belongs to the UPF0391 family.

The protein localises to the cell membrane. This chain is UPF0391 membrane protein Oant_1245, found in Brucella anthropi (strain ATCC 49188 / DSM 6882 / CCUG 24695 / JCM 21032 / LMG 3331 / NBRC 15819 / NCTC 12168 / Alc 37) (Ochrobactrum anthropi).